Reading from the N-terminus, the 80-residue chain is Protein P9 (80 aa).

In terms of assembly, self-associates.

In Beta vulgaris (Sugar beet), this protein is Protein P9.